The primary structure comprises 408 residues: 2,3-bisphosphoglycerate-independent phosphoglycerate mutase 1 (408 aa).

It belongs to the BPG-independent phosphoglycerate mutase family. A-PGAM subfamily. Monomer. It depends on Mn(2+) as a cofactor.

It catalyses the reaction (2R)-2-phosphoglycerate = (2R)-3-phosphoglycerate. Its pathway is carbohydrate degradation; glycolysis; pyruvate from D-glyceraldehyde 3-phosphate: step 3/5. Catalyzes the interconversion of 2-phosphoglycerate and 3-phosphoglycerate. The sequence is that of 2,3-bisphosphoglycerate-independent phosphoglycerate mutase 1 (apgM1) from Archaeoglobus fulgidus (strain ATCC 49558 / DSM 4304 / JCM 9628 / NBRC 100126 / VC-16).